Here is a 459-residue protein sequence, read N- to C-terminus: ATP synthase subunit beta (459 aa).

Residue Gly-148–Thr-155 participates in ATP binding.

Belongs to the ATPase alpha/beta chains family. F-type ATPases have 2 components, CF(1) - the catalytic core - and CF(0) - the membrane proton channel. CF(1) has five subunits: alpha(3), beta(3), gamma(1), delta(1), epsilon(1). CF(0) has three main subunits: a(1), b(2) and c(9-12). The alpha and beta chains form an alternating ring which encloses part of the gamma chain. CF(1) is attached to CF(0) by a central stalk formed by the gamma and epsilon chains, while a peripheral stalk is formed by the delta and b chains.

It is found in the cell inner membrane. The enzyme catalyses ATP + H2O + 4 H(+)(in) = ADP + phosphate + 5 H(+)(out). Produces ATP from ADP in the presence of a proton gradient across the membrane. The catalytic sites are hosted primarily by the beta subunits. The protein is ATP synthase subunit beta of Ruthia magnifica subsp. Calyptogena magnifica.